We begin with the raw amino-acid sequence, 120 residues long: Large ribosomal subunit protein uL18 (120 aa).

Over residues 1 to 20 (MKSTRKSATQRRHRRLRRHL) the composition is skewed to basic residues. The disordered stretch occupies residues 1–26 (MKSTRKSATQRRHRRLRRHLSGTSER).

Belongs to the universal ribosomal protein uL18 family. Part of the 50S ribosomal subunit; part of the 5S rRNA/L5/L18/L25 subcomplex. Contacts the 5S and 23S rRNAs.

Its function is as follows. This is one of the proteins that bind and probably mediate the attachment of the 5S RNA into the large ribosomal subunit, where it forms part of the central protuberance. In Synechocystis sp. (strain ATCC 27184 / PCC 6803 / Kazusa), this protein is Large ribosomal subunit protein uL18.